Reading from the N-terminus, the 287-residue chain is Bifunctional protein FolD (287 aa).

NADP(+)-binding positions include 166–168 (GAS) and I232.

This sequence belongs to the tetrahydrofolate dehydrogenase/cyclohydrolase family. In terms of assembly, homodimer.

The catalysed reaction is (6R)-5,10-methylene-5,6,7,8-tetrahydrofolate + NADP(+) = (6R)-5,10-methenyltetrahydrofolate + NADPH. The enzyme catalyses (6R)-5,10-methenyltetrahydrofolate + H2O = (6R)-10-formyltetrahydrofolate + H(+). Its pathway is one-carbon metabolism; tetrahydrofolate interconversion. Catalyzes the oxidation of 5,10-methylenetetrahydrofolate to 5,10-methenyltetrahydrofolate and then the hydrolysis of 5,10-methenyltetrahydrofolate to 10-formyltetrahydrofolate. In Buchnera aphidicola subsp. Baizongia pistaciae (strain Bp), this protein is Bifunctional protein FolD.